The following is a 487-amino-acid chain: MPVPPPPAPPPPPTFALANTEKPSLNKTEQAGRNALLSDISKGKKLKKTVTNDRSAPILDKPKGAGGGYGGGSGGGGGGGSSGGGGNFGGGGPPGLGGLFQAGMPKLRSTANRDNDSGGSRPPILPPGGRATSAKPFSSPSGPGRFPAPSPGHRSGPPEPPRNRMPPPRPDVGSKPDSLPPPVPNTPRPIPSSLHNRGSPAGLGAPRPPFPGNRGAAFGAGSVRQNLSSSSSPFPRPPLPPTPSRALDDKPPPPPPPVGNRPSMHREAVPPPPSQNSKPPVPSTPRPGAGSQAPPPPPPSRPGPPPLPPTSSDEIPRLPQRNLSLTSPTPPLPSPGRSGPLPPPPTERPPPPVRDPPGRSGPLPPPPPINRNGSTARALPATPQLPSRSGMDSPRSGPRPPLPPDRPGAGAPPPPPPSTSVRNGFQDSSCEDEWESRFYFHPISDLPPPEPYVPTTKTYPSKVARSESRSGSNRRERGAPPLPPIPR.

The segment covering 1–14 (MPVPPPPAPPPPPT) has biased composition (pro residues). Positions 1–487 (MPVPPPPAPP…GAPPLPPIPR (487 aa)) are disordered. Over residues 21 to 31 (EKPSLNKTEQA) the composition is skewed to polar residues. The 18-residue stretch at 32 to 49 (GRNALLSDISKGKKLKKT) folds into the WH2 domain. Arginine 33 carries the post-translational modification Asymmetric dimethylarginine. The binds actin stretch occupies residues 45–48 (KLKK). Gly residues predominate over residues 64–100 (GAGGGYGGGSGGGGGGGSSGGGGNFGGGGPPGLGGLF). An omega-N-methylarginine mark is found at arginine 121 and arginine 130. Low complexity predominate over residues 136 to 147 (PFSSPSGPGRFP). The residue at position 138 (serine 138) is a Phosphoserine. Composition is skewed to pro residues over residues 157–170 (PPEP…PPRP) and 178–190 (SLPP…PRPI). Serine 222 carries the post-translational modification Phosphoserine. Composition is skewed to pro residues over residues 234 to 243 (FPRPPLPPTP), 269 to 285 (VPPP…PSTP), and 293 to 309 (APPP…PLPP). The residue at position 324 (serine 324) is a Phosphoserine. Residues 328 to 355 (PTPPLPSPGRSGPLPPPPTERPPPPVRD) are compositionally biased toward pro residues. Position 329 is a phosphothreonine (threonine 329). Serine 334 bears the Phosphoserine mark. XRSGPXPPXP motif repeat units lie at residues 336-345 (GRSGPLPPPP), 358-367 (GRSGPLPPPP), and 394-403 (PRSGPRPPLP). The span at 397–418 (GPRPPLPPDRPGAGAPPPPPPS) shows a compositional bias: pro residues. Polar residues predominate over residues 419–428 (TSVRNGFQDS). Residues 464–478 (ARSESRSGSNRRERG) are compositionally biased toward basic and acidic residues.

This sequence belongs to the verprolin family. As to quaternary structure, binds to WAS within the N-terminal region, at a site distinct from the CDC42-binding site. Binds profilin and actin. Interacts with DBNL. Binds to WASL. Interacts with DBNL. Interacts with FNBP1L (via the SH3 domain). Isoforms were differentially expressed. One isoform was ubiquitously expressed, another was muscle-specific and another was expressed in the liver, heart and testis.

The protein localises to the cytoplasmic vesicle. Its subcellular location is the cytoplasm. It is found in the cytoskeleton. It localises to the cell projection. The protein resides in the ruffle. Plays a role in the reorganization of the actin cytoskeleton. Contributes with NCK1 and GRB2 in the recruitment and activation of WASL. Plays a role in the formation of cell ruffles. May participate in regulating the subcellular localization of WASL, resulting in the disassembly of stress fibers in favor of filopodia formation. The chain is WAS/WASL-interacting protein family member 1 (Wipf1) from Rattus norvegicus (Rat).